Consider the following 663-residue polypeptide: Alcohol oxidase 2 (663 aa).

Residue 8 to 38 coordinates FAD; the sequence is DILVLGGGSSGSCIAGRLANLDHSLKVGLIE. His-567 acts as the Proton acceptor in catalysis. The Microbody targeting signal signature appears at 661–663; it reads ARF.

Belongs to the GMC oxidoreductase family. Homooctamer. FAD is required as a cofactor.

The protein localises to the peroxisome matrix. It carries out the reaction a primary alcohol + O2 = an aldehyde + H2O2. Its pathway is energy metabolism; methane degradation. Its function is as follows. Minor isoform of alcohol oxidase, which catalyzes the oxidation of methanol to formaldehyde and hydrogen peroxide, the first step in the methanol utilization pathway of methylotrophic yeasts. In Komagataella phaffii (strain ATCC 76273 / CBS 7435 / CECT 11047 / NRRL Y-11430 / Wegner 21-1) (Yeast), this protein is Alcohol oxidase 2 (AOX2).